The sequence spans 763 residues: MEDPGETGAHPLGATNLNFVPGHQQKEKPSTDPLYDTPDTRGVQAGGSQQPARTVSLRERLLITRPVWLQLRANAAAALHVLRTEPPGTFLVRKSNTRQCQALCVRLPEASGPSFVSSHYIEESTGGVSLEGSELMFQDLVQLICGYCRTRAIHQAATHKELEAISHLGMEFWSSSLNTKDQQRPSEAPPIPRLKARSPQELDQGTGAALCFFNPLFPGDLGPTKREKFKRSFKVRVSTETSSPLSPPAVPPPPVPVLPGTSSSQTERLPPRQLLQRESSVGYRVPGSAASPCLPPLPSLQEVDCCSPSSSEEEGSSGSPTTSPRLSRPRHRRPLLRSMSSAFCSLLAPERQVGRAATMLMQNRYTAVGQLVQDLLTQVRAGPEPRELQGIRQALSRARAMLSAELGPEKLLPPERLELVLEKSLHRSVLKPLRPILAARLRRRLSADGSLGRLAEGFRLARTQGPGAFGSHLTLSSPVETEQVRQKLLQLLRAYSPSAQVKWLLQACKLLYTALKSQAGENAGADEFLPLLSLVLAQCDLPDLLLEAEYMSELLEPTLLTGEGGYYLTSLSASLALLSGLSQARALPLSPAQELQRSLALWEQRRLPATHSFQHLLRVAYQDPSTGCTSKTLAVPPGSSIATLSQLCATKFRVTQPDAFGLFLYKDQGYHRLPPEALAHRLPATGYLIYRRAERPETQGAVAEKAKTGSKGPEAGAWEEETGGLNREGKPRIAVDQEGKDQARGGHIGPEEQKAEGSQALEE.

Met-1 is subject to N-acetylmethionine. The disordered stretch occupies residues 1 to 52 (MEDPGETGAHPLGATNLNFVPGHQQKEKPSTDPLYDTPDTRGVQAGGSQQPA). Tyr-35 carries the post-translational modification Phosphotyrosine; by ABL1 and ABL2. One can recognise an SH2 domain in the interval 68–151 (WLQLRANAAA…QLICGYCRTR (84 aa)). Disordered stretches follow at residues 177 to 200 (LNTK…RSPQ), 238 to 273 (STET…PPRQ), and 301 to 331 (QEVD…RPRH). Phosphoserine occurs at positions 198, 246, 319, and 323. Residues 245-257 (LSPPAVPPPPVPV) are compositionally biased toward pro residues. Over residues 316-326 (SSGSPTTSPRL) the composition is skewed to low complexity. Ser-340 bears the Phosphoserine; by PKD/PRKD1 mark. In terms of domain architecture, VPS9 spans 445–587 (LSADGSLGRL…LSGLSQARAL (143 aa)). Position 598 is a phosphoserine (Ser-598). Positions 613–695 (FQHLLRVAYQ…GYLIYRRAER (83 aa)) constitute a Ras-associating domain. Position 681 is an omega-N-methylarginine (Arg-681). The disordered stretch occupies residues 698–763 (TQGAVAEKAK…KAEGSQALEE (66 aa)). A compositionally biased stretch (basic and acidic residues) spans 727–755 (REGKPRIAVDQEGKDQARGGHIGPEEQKA).

Belongs to the RIN (Ras interaction/interference) family. As to quaternary structure, interacts with the GTP-bound form of Ras proteins (NRAS, HRAS and KRAS). This interaction prevents the association between RAF1 and Ras. Interacts with 14-3-3 proteins YWHAB, YWHAE and YWHAZ when phosphorylated on Ser-340. Interacts with the SH3 domain of ABL1 and ABL2. Interacts with RAB5A. The interaction with Ras is probably regulated and antagonized by the interaction with 14-3-3 proteins. The interaction with 14-3-3 proteins is regulated by phosphorylation on Ser-340. Post-translationally, phosphorylated on tyrosine residues by ABL1 and ABL2. Phosphorylation at Ser-340 by PRKD1 induces interaction with 14-3-3 proteins. In terms of tissue distribution, highly expressed in brain. Weakly or no expressed in other tissues, except in testis, where it is expressed at intermediate level. In brain, it is mainly expressed in postnatal forebrain neurons in which it is localized in dendrites and colocalizes with Ras.

The protein localises to the cytoplasm. Its subcellular location is the membrane. It is found in the cytoskeleton. Ras effector protein, which may serve as an inhibitory modulator of neuronal plasticity in aversive memory formation. Can affect Ras signaling at different levels. First, by competing with RAF1 protein for binding to activated Ras. Second, by enhancing signaling from ABL1 and ABL2, which regulate cytoskeletal remodeling. Third, by activating RAB5A, possibly by functioning as a guanine nucleotide exchange factor (GEF) for RAB5A, by exchanging bound GDP for free GTP, and facilitating Ras-activated receptor endocytosis. In Mus musculus (Mouse), this protein is Ras and Rab interactor 1 (Rin1).